The following is a 2209-amino-acid chain: Genome polyprotein (2209 aa).

Glycine 2 carries the N-myristoyl glycine; by host lipid modification. Over 2-1520 the chain is Cytoplasmic; that stretch reads GAQVSSQKVG…NINRAMTILQ (1519 aa). The tract at residues 580 to 600 is amphipathic alpha-helix; it reads GLGQMLESMIDNTVRETVGAA. Active-site for protease 2A activity residues include histidine 901 and aspartate 919. Zn(2+) is bound by residues cysteine 936 and cysteine 938. The active-site For protease 2A activity is the cysteine 990. Residues cysteine 996 and histidine 998 each contribute to the Zn(2+) site. Residues 1128 to 1200 are membrane-binding; the sequence is GDSWLKKFTE…HQSCPSQEHQ (73 aa). An oligomerization region spans residues 1128 to 1266; it reads GDSWLKKFTE…SPGTGKSVAT (139 aa). Residues 1149 to 1153 form an RNA-binding region; it reads SNKIS. The region spanning 1232 to 1388 is the SF3 helicase domain; it reads EHTINNYIQF…NEYSRDGKLN (157 aa). ATP is bound at residue 1256 to 1263; sequence GSPGTGKS. 4 residues coordinate Zn(2+): cysteine 1396, cysteine 1399, cysteine 1408, and cysteine 1413. The C4-type zinc-finger motif lies at 1396 to 1413; it reads CKNCHQPANFKRCCPLVC. Residues 1440-1447 are RNA-binding; that stretch reads ERNRRSNI. The oligomerization stretch occupies residues 1451 to 1456; that stretch reads MEALFQ. Residues 1521–1536 lie within the membrane without spanning it; it reads AVTTFAAVAGVVYVMY. Topologically, residues 1537–2209 are cytoplasmic; the sequence is KLFAGHQGAY…TLYRRWLDSF (673 aa). An O-(5'-phospho-RNA)-tyrosine modification is found at tyrosine 1546. In terms of domain architecture, Peptidase C3 spans 1566 to 1744; it reads GPGFDYAVAM…FAAALKRSYF (179 aa). Catalysis depends on for protease 3C activity residues histidine 1605, glutamate 1636, and cysteine 1712. The 116-residue stretch at 1975–2090 folds into the RdRp catalytic domain; sequence EKLFAFDYTG…SYPHEVDASL (116 aa). Positions 1981 and 2076 each coordinate Mg(2+).

This sequence belongs to the picornaviruses polyprotein family. Interacts with capsid protein VP1 and capsid protein VP3 to form heterotrimeric protomers. In terms of assembly, interacts with capsid protein VP0, and capsid protein VP3 to form heterotrimeric protomers. Interacts with human PVR. Five protomers subsequently associate to form pentamers which serve as building blocks for the capsid. Interacts with capsid protein VP2, capsid protein VP3 and capsid protein VP4 following cleavage of capsid protein VP0. As to quaternary structure, interacts with capsid protein VP1 and capsid protein VP3 in the mature capsid. Interacts with capsid protein VP0 and capsid protein VP1 to form heterotrimeric protomers. Five protomers subsequently associate to form pentamers which serve as building blocks for the capsid. Interacts with capsid protein VP4 in the mature capsid. Interacts with protein 2C; this interaction may be important for virion morphogenesis. In terms of assembly, interacts with capsid protein VP1 and capsid protein VP3. As to quaternary structure, homodimer. Homohexamer; forms a hexameric ring structure with 6-fold symmetry characteristic of AAA+ ATPases. Interacts (via N-terminus) with host RTN3 (via reticulon domain); this interaction is important for viral replication. Interacts with capsid protein VP3; this interaction may be important for virion morphogenesis. In terms of assembly, interacts with protein 3CD. As to quaternary structure, homodimer. Interacts with host GBF1. Interacts (via GOLD domain) with host ACBD3 (via GOLD domain); this interaction allows the formation of a viral protein 3A/ACBD3 heterotetramer with a 2:2 stoichiometry, which will stimulate the recruitment of host PI4KB in order to synthesize PI4P at the viral RNA replication sites. Interacts with RNA-directed RNA polymerase. In terms of assembly, interacts with protein 3AB and with RNA-directed RNA polymerase. As to quaternary structure, interacts with Viral protein genome-linked and with protein 3CD. It depends on Mg(2+) as a cofactor. In terms of processing, specific enzymatic cleavages in vivo by the viral proteases yield processing intermediates and the mature proteins. Myristoylation is required for the formation of pentamers during virus assembly. Further assembly of 12 pentamers and a molecule of genomic RNA generates the provirion. Post-translationally, during virion maturation, immature virions are rendered infectious following cleavage of VP0 into VP4 and VP2. This maturation seems to be an autocatalytic event triggered by the presence of RNA in the capsid and it is followed by a conformational change infectious virion. In terms of processing, myristoylation is required during RNA encapsidation and formation of the mature virus particle. VPg is uridylylated by the polymerase into VPg-pUpU. This acts as a nucleotide-peptide primer for the genomic RNA replication.

It is found in the virion. The protein localises to the host cytoplasm. It localises to the host cytoplasmic vesicle membrane. Its subcellular location is the host nucleus. The enzyme catalyses a ribonucleoside 5'-triphosphate + H2O = a ribonucleoside 5'-diphosphate + phosphate + H(+). It catalyses the reaction Selective cleavage of Tyr-|-Gly bond in the picornavirus polyprotein.. The catalysed reaction is RNA(n) + a ribonucleoside 5'-triphosphate = RNA(n+1) + diphosphate. It carries out the reaction Selective cleavage of Gln-|-Gly bond in the poliovirus polyprotein. In other picornavirus reactions Glu may be substituted for Gln, and Ser or Thr for Gly.. Its activity is regulated as follows. Replication or transcription is subject to high level of random mutations by the nucleotide analog ribavirin. In terms of biological role, forms an icosahedral capsid of pseudo T=3 symmetry with capsid proteins VP2 and VP3. The capsid is 300 Angstroms in diameter, composed of 60 copies of each capsid protein and enclosing the viral positive strand RNA genome. Capsid protein VP1 mainly forms the vertices of the capsid. Capsid protein VP1 interacts with host cell receptor PVR to provide virion attachment to target host cells. This attachment induces virion internalization predominantly through clathrin- and caveolin-independent endocytosis in Hela cells and through caveolin-mediated endocytosis in brain microvascular endothelial cells. Tyrosine kinases are probably involved in the entry process. Virus binding to PVR induces increased junctional permeability and rearrangement of junctional proteins. Modulation of endothelial tight junctions, as well as cytolytic infection of endothelial cells themselves, may result in loss of endothelial integrity which may help the virus to reach the CNS. After binding to its receptor, the capsid undergoes conformational changes. Capsid protein VP1 N-terminus (that contains an amphipathic alpha-helix) and capsid protein VP4 are externalized. Together, they shape a pore in the host membrane through which viral genome is translocated to host cell cytoplasm. Its function is as follows. Forms an icosahedral capsid of pseudo T=3 symmetry with capsid proteins VP2 and VP3. The capsid is 300 Angstroms in diameter, composed of 60 copies of each capsid protein and enclosing the viral positive strand RNA genome. Lies on the inner surface of the capsid shell. After binding to the host receptor, the capsid undergoes conformational changes. Capsid protein VP4 is released, Capsid protein VP1 N-terminus is externalized, and together, they shape a pore in the host membrane through which the viral genome is translocated into the host cell cytoplasm. Functionally, component of immature procapsids, which is cleaved into capsid proteins VP4 and VP2 after maturation. Allows the capsid to remain inactive before the maturation step. In terms of biological role, cysteine protease that cleaves viral polyprotein and specific host proteins. It is responsible for the autocatalytic cleavage between the P1 and P2 regions, which is the first cleavage occurring in the polyprotein. Also cleaves the host translation initiation factor EIF4G1, in order to shut down the capped cellular mRNA translation. Inhibits the host nucleus-cytoplasm protein and RNA trafficking by cleaving host members of the nuclear pores including NUP98, NUP62 and NUP153. Counteracts stress granule formation probably by antagonizing its assembly or promoting its dissassembly. Cleaves and inhibits host IFIH1/MDA5, thereby inhibiting the type-I IFN production and the establishment of the antiviral state. Cleaves and inhibits host MAVS, thereby inhibiting the type-I IFN production and the establishment of the antiviral state. Its function is as follows. Plays an essential role in the virus replication cycle by acting as a viroporin. Creates a pore in the host endoplasmic reticulum and as a consequence releases Ca2+ in the cytoplasm of infected cell. In turn, high levels of cytoplasmic calcium may trigger membrane trafficking and transport of viral ER-associated proteins to viroplasms, sites of viral genome replication. Induces and associates with structural rearrangements of intracellular membranes. Displays RNA-binding, nucleotide binding and NTPase activities. May play a role in virion morphogenesis and viral RNA encapsidation by interacting with the capsid protein VP3. Functionally, localizes the viral replication complex to the surface of membranous vesicles. Together with protein 3CD binds the Cis-Active RNA Element (CRE) which is involved in RNA synthesis initiation. Acts as a cofactor to stimulate the activity of 3D polymerase, maybe through a nucleid acid chaperone activity. In terms of biological role, localizes the viral replication complex to the surface of membranous vesicles. It inhibits host cell endoplasmic reticulum-to-Golgi apparatus transport and causes the disassembly of the Golgi complex, possibly through GBF1 interaction. This would result in depletion of MHC, trail receptors and IFN receptors at the host cell surface. Plays an essential role in viral RNA replication by recruiting ACBD3 and PI4KB at the viral replication sites, thereby allowing the formation of the rearranged membranous structures where viral replication takes place. Its function is as follows. Acts as a primer for viral RNA replication and remains covalently bound to viral genomic RNA. VPg is uridylylated prior to priming replication into VPg-pUpU. The oriI viral genomic sequence may act as a template for this. The VPg-pUpU is then used as primer on the genomic RNA poly(A) by the RNA-dependent RNA polymerase to replicate the viral genome. During genome replication, the VPg-RNA linkage is removed by the host TDP2, thereby accelerating replication. During the late stage of the replication cycle, host TDP2 is excluded from sites of viral RNA synthesis and encapsidation, allowing for the generation of progeny virions. Involved in the viral replication complex and viral polypeptide maturation. It exhibits protease activity with a specificity and catalytic efficiency that is different from protease 3C. Protein 3CD lacks polymerase activity. Protein 3CD binds to the 5'UTR of the viral genome. Functionally, major viral protease that mediates proteolytic processing of the polyprotein. Cleaves host EIF5B, contributing to host translation shutoff. Also cleaves host PABPC1, contributing to host translation shutoff. Cleaves host RIGI and thus contributes to the inhibition of type I interferon production. Cleaves host NLRP1, triggers host N-glycine-mediated degradation of the autoinhibitory NLRP1 N-terminal fragment. Inhibits the integrated stress response (ISR) in the infected cell by cleaving host G3BP1. Stress granule formation is thus inhibited, which allows protein synthesis and viral replication. In terms of biological role, replicates the viral genomic RNA on the surface of intracellular membranes. May form linear arrays of subunits that propagate along a strong head-to-tail interaction called interface-I. Covalently attaches UMP to a tyrosine of VPg, which is used to prime RNA synthesis. The positive stranded RNA genome is first replicated at virus induced membranous vesicles, creating a dsRNA genomic replication form. This dsRNA is then used as template to synthesize positive stranded RNA genomes. ss(+)RNA genomes are either translated, replicated or encapsidated. The chain is Genome polyprotein from Homo sapiens (Human).